The following is a 338-amino-acid chain: MGSVPVPVANVPRIDVSPLFGDDKEKKLEVARAIDAASRDTGFFYAVNHGVDLPWLSRETNKFHMSITDEEKWQLAIRAYNKEHESQIRAGYYLPIPGKKAVESFCYLNPSFSPDHPRIKEPTPMHEVNVWPDEAKHPGFRAFAEKYYWDVFGLSSAVLRGYALALGRDEDFFTRHSRRDTTLSSVVLIRYPYLDPYPEPAIKTADDGTKLSFEWHEDVSLITVLYQSDVQNLQVKTPQGWQDIQADDTGFLINCGSYMAHITDDYYPAPIHRVKWVNEERQSLPFFVNLGWEDTIQPWDPATAKDGAKDAAKDKPAISYGEYLQGGLRGLINKNGQT.

Arg89, Tyr93, Ser185, and Tyr191 together coordinate isopenicillin N. Positions 89, 93, 185, 191, 216, and 218 each coordinate N-[(5S)-5-amino-5-carboxypentanoyl]-L-cysteinyl-D-valine. The 109-residue stretch at 182–290 (TLSSVVLIRY…RQSLPFFVNL (109 aa)) folds into the Fe2OG dioxygenase domain. Fe(2+) contacts are provided by His216, Asp218, and His272. Arg281 serves as a coordination point for 2-oxoglutarate. Ser283 provides a ligand contact to isopenicillin N. N-[(5S)-5-amino-5-carboxypentanoyl]-L-cysteinyl-D-valine is bound at residue Ser283.

It belongs to the iron/ascorbate-dependent oxidoreductase family. Monomer. Fe(2+) is required as a cofactor.

The protein resides in the cytoplasm. It localises to the cytosol. The catalysed reaction is N-[(5S)-5-amino-5-carboxypentanoyl]-L-cysteinyl-D-valine + O2 = isopenicillin N + 2 H2O. It participates in antibiotic biosynthesis; penicillin G biosynthesis; penicillin G from L-alpha-aminoadipate and L-cysteine and L-valine: step 2/3. Its function is as follows. Isopenicillin N synthase; part of the gene cluster that mediates the biosynthesis of penicillin, the world's most important antibiotic. IpnA catalyzes the cyclization of the tripeptide N-[(5S)-5-amino-5-carboxypentanoyl]-L-cysteinyl-D-valine (LLD-ACV or ACV) to form isopenicillin N (IPN) that contains the beta-lactam nucleus. The penicillin biosynthesis occurs via 3 enzymatic steps, the first corresponding to the production of the tripeptide N-[(5S)-5-amino-5-carboxypentanoyl]-L-cysteinyl-D-valine (LLD-ACV or ACV) by the NRPS pcbAB. The tripeptide ACV is then cyclized to isopenicillin N (IPN) by the isopenicillin N synthase pcbC that forms the beta-lactam nucleus. Finally, the alpha-aminoadipyl side chain is exchanged for phenylacetic acid by the isopenicillin N acyltransferase penDE to yield penicillin in the peroxisomal matrix. The protein is Isopenicillin N synthase (PCBC) of Hapsidospora chrysogena (Acremonium chrysogenum).